Consider the following 207-residue polypeptide: Guanylate kinase (207 aa).

The 181-residue stretch at 4 to 184 folds into the Guanylate kinase-like domain; the sequence is GTLYIVSAPS…ALSDLKTIIR (181 aa). Residue 11–18 participates in ATP binding; it reads APSGAGKS.

Belongs to the guanylate kinase family.

It is found in the cytoplasm. The enzyme catalyses GMP + ATP = GDP + ADP. It catalyses the reaction dZMP + ATP = dZDP + ADP. It functions in the pathway purine metabolism. Essential for recycling GMP and indirectly, cGMP. In terms of biological role, (Microbial infection) Catalyzes the phosphorylation of dZMP to dZDP, when the bacterium is infected by a phage that produces the substrate for the synthesis of dZTP (2- amino-2'-deoxyadenosine 5'-triphosphate), which is then used by the phage as a DNA polymerase substrate. The chain is Guanylate kinase from Salmonella choleraesuis (strain SC-B67).